A 295-amino-acid chain; its full sequence is Bifunctional protein FolD (295 aa).

NADP(+) is bound by residues 166 to 168, S191, and I232; that span reads GRS.

Belongs to the tetrahydrofolate dehydrogenase/cyclohydrolase family. Homodimer.

It catalyses the reaction (6R)-5,10-methylene-5,6,7,8-tetrahydrofolate + NADP(+) = (6R)-5,10-methenyltetrahydrofolate + NADPH. The enzyme catalyses (6R)-5,10-methenyltetrahydrofolate + H2O = (6R)-10-formyltetrahydrofolate + H(+). The protein operates within one-carbon metabolism; tetrahydrofolate interconversion. Catalyzes the oxidation of 5,10-methylenetetrahydrofolate to 5,10-methenyltetrahydrofolate and then the hydrolysis of 5,10-methenyltetrahydrofolate to 10-formyltetrahydrofolate. The sequence is that of Bifunctional protein FolD from Wolbachia sp. subsp. Brugia malayi (strain TRS).